The following is a 563-amino-acid chain: Src substrate protein p85 (563 aa).

Cortactin repeat units lie at residues 89 to 125 (ASHG…SQVD), 126 to 162 (SVKG…SQKD), 163 to 199 (YSSG…SQKD), 200 to 236 (YSKG…SQKD), 237 to 273 (YVKG…SQKD), and 274 to 310 (YKSG…SQQD). The Cortactin 7; truncated repeat unit spans residues 311–333 (YSKGFGGKYGVQKDRMDKNAATF). The segment at 331–477 (ATFEDIEKPT…EAVSQREAEY (147 aa)) is disordered. A coiled-coil region spans residues 349–410 (VERVANKTSS…EEQAKAKKQT (62 aa)). Positions 366-405 (LAKEKEQEDRRKAEAERAQRMAREKQEQEEARRKLEEQAK) are enriched in basic and acidic residues. An SH3 domain is found at 505–563 (ELGITAIALYDYQAAGDDEISFDPDDIITNIEMIDDGWWRGVCKGRYGLFPANYVELRQ).

In terms of processing, acetylated. Post-translationally, in normal cells, appears to be phosphorylated on serine and threonine; in cells expressing activated forms of pp60-src, they become heavily phosphorylated on tyrosine in vitro. Tyrosine phosphorylation in transformed cells may contribute to cellular growth regulation and transformation.

Its subcellular location is the cytoplasm. It is found in the cytoskeleton. The protein localises to the cell projection. The protein resides in the lamellipodium. It localises to the ruffle. Its subcellular location is the dendrite. It is found in the cell membrane. The protein localises to the podosome. The protein resides in the cell junction. It localises to the focal adhesion. Its subcellular location is the membrane. It is found in the clathrin-coated pit. The protein localises to the dendritic spine. The protein resides in the cell cortex. It localises to the endoplasmic reticulum. Its function is as follows. Contributes to the organization of the actin cytoskeleton and cell shape. Plays a role in the formation of lamellipodia and in cell migration. Plays a role in the regulation of neuron morphology, axon growth and formation of neuronal growth cones, and may play a role in the regulation of neuronal spine density. Plays a role in focal adhesion assembly and turnover. Plays a role in intracellular protein transport and endocytosis, and in modulating the levels of potassium channels present at the cell membrane. Plays a role in endocytosis via clathrin-coated pits. In Gallus gallus (Chicken), this protein is Src substrate protein p85 (CTTN1).